The following is a 450-amino-acid chain: 3-phosphoshikimate 1-carboxyvinyltransferase (450 aa).

The segment at 1 to 25 (MSAHGDPKPMTARKGGALTGTAEVP) is disordered. 3-phosphoshikimate is bound by residues lysine 28, serine 29, and arginine 33. Lysine 28 contributes to the phosphoenolpyruvate binding site. Glycine 101 and arginine 129 together coordinate phosphoenolpyruvate. 3-phosphoshikimate is bound by residues serine 174, glutamine 176, aspartate 327, and lysine 354. A phosphoenolpyruvate-binding site is contributed by glutamine 176. Aspartate 327 (proton acceptor) is an active-site residue. The phosphoenolpyruvate site is built by arginine 358 and arginine 403.

This sequence belongs to the EPSP synthase family. In terms of assembly, monomer.

The protein resides in the cytoplasm. It catalyses the reaction 3-phosphoshikimate + phosphoenolpyruvate = 5-O-(1-carboxyvinyl)-3-phosphoshikimate + phosphate. Its pathway is metabolic intermediate biosynthesis; chorismate biosynthesis; chorismate from D-erythrose 4-phosphate and phosphoenolpyruvate: step 6/7. Functionally, catalyzes the transfer of the enolpyruvyl moiety of phosphoenolpyruvate (PEP) to the 5-hydroxyl of shikimate-3-phosphate (S3P) to produce enolpyruvyl shikimate-3-phosphate and inorganic phosphate. The sequence is that of 3-phosphoshikimate 1-carboxyvinyltransferase from Jannaschia sp. (strain CCS1).